The primary structure comprises 176 residues: Retinol-binding protein 4-B (176 aa).

At Ser1 the chain carries N-acetylserine. Disulfide bonds link Cys3–Cys159, Cys69–Cys173, and Cys119–Cys128. Residue Gln97 coordinates substrate.

This sequence belongs to the calycin superfamily. Lipocalin family.

The protein resides in the secreted. Its function is as follows. RBP delivers retinol from the liver stores to the peripheral tissues. In plasma, the RBP-retinol complex interacts with transthyretin, this prevents its loss by filtration through the kidney glomeruli. The sequence is that of Retinol-binding protein 4-B (rbp4b) from Oncorhynchus mykiss (Rainbow trout).